A 164-amino-acid chain; its full sequence is Lipoprotein signal peptidase (164 aa).

2 consecutive transmembrane segments (helical) span residues 68–88 (TILV…LWNA) and 96–116 (FWGL…RAMF). Active-site residues include Asp-121 and Asp-139. Residues 134 to 154 (TFNVADSAIVVGSCLLLIDLL) traverse the membrane as a helical segment.

This sequence belongs to the peptidase A8 family.

The protein resides in the cell inner membrane. The catalysed reaction is Release of signal peptides from bacterial membrane prolipoproteins. Hydrolyzes -Xaa-Yaa-Zaa-|-(S,diacylglyceryl)Cys-, in which Xaa is hydrophobic (preferably Leu), and Yaa (Ala or Ser) and Zaa (Gly or Ala) have small, neutral side chains.. It functions in the pathway protein modification; lipoprotein biosynthesis (signal peptide cleavage). In terms of biological role, this protein specifically catalyzes the removal of signal peptides from prolipoproteins. The polypeptide is Lipoprotein signal peptidase (Solibacter usitatus (strain Ellin6076)).